A 629-amino-acid chain; its full sequence is Embryonic polyadenylate-binding protein B (629 aa).

RRM domains lie at 11-89 (ASLY…WSQR), 99-175 (GNVF…HFKS), 191-268 (TNVY…RAQK), and 294-370 (VNLY…LAQR). Residues 539–616 (QEPLTASLLA…AVAVLQAHQA (78 aa)) enclose the PABC domain.

The protein belongs to the polyadenylate-binding protein type-1 family. As to quaternary structure, interacts with dazl in an RNA-independent manner. The C-terminus can self-associate and also interact with the C-terminus of pabpc1, independently of RNA. RRM 1 and RRM 2 interact with both eif4g1 and paip1, and the C-terminus also interacts with paip1. Prior to oocyte maturation, found in a complex with dazl and pum2 proteins and spdy1 mRNA; pum2 dissociates from the complex during maturation. Interacts with the translation termination factor sup35/erf3.

The protein localises to the cytoplasm. In terms of biological role, binds and protects the poly(A) tail of mRNA with or without an AU-rich element (ARE) and prevents mRNA deadenylation. Stimulates the translation of mRNAs to which it is bound during early development. This is Embryonic polyadenylate-binding protein B (epabp-b) from Xenopus laevis (African clawed frog).